A 584-amino-acid polypeptide reads, in one-letter code: Protein phosphatase 2A scaffold subunit (584 aa).

HEAT repeat units follow at residues 7–45 (ESDDYHPIVILIDELKNEDIQLRLNSIKKLQSIAKALGP), 46–84 (ERTRTELIPYLQDSVLEDEDEVLVVLSEELGNLIEFVGG), 86–123 (EHAVCLLPPLQILAGAEELVVREKAVESLCKIAKEIPT), 168–206 (LRKTFGGLCHDDTPMVKRAAATNLGSFAKQIEKESVKSE), 207–239 (ILPLFQSLSTDEQDSVRLLGVENCALLGSMLTN), 240–278 (EENIQFILPTIKASSLDKSWRVRYMVARLLKELCESMGT), 279–317 (EITKTELIGAFVKLLKDTEAEVRTEASLRIADVCSLLTK), 318–356 (EMNIKTILPCVKDLVSDSSQHVRAALAQVIMSLAPIYGK), 358–395 (DTLTHLLELFLHLLKDDFPDVRLNIISKLDQVSKVIGI), 397–434 (MLSQSLLPAIVELAEDHQWRVRLAIIDYIPLLASQLGV), 441–479 (LGNLCMTWLGDPVFSIREAATNNLKKLTEVFGVDWAKNN), 480–512 (IIPKVLSLHSHPNYLYRMTTLFSISTLSTVVGG), 513–551 (DVISSSMVPLLAKMVSDKVPNIRFNVAKTFQTIIPLLDS), and 553–584 (IVQSRVKPLLVKLHEDTDKDVKFYASQALQLC).

Belongs to the phosphatase 2A regulatory subunit A family. In terms of assembly, component of the Sca1 complex composed of at least gefA, gefH, scaA, phr, and the protein phosphatase 2A subunits pppA and pho2B.

Its subcellular location is the cytoplasm. The protein resides in the cytosol. The protein localises to the cell membrane. Scaffolding molecule which may coordinate the assembly of the catalytic subunit and a variable regulatory B subunit. Component of the Sca1 complex, a regulator of cell motility, chemotaxis and signal relay. The Sca1 complex is recruited to the plasma membrane in a chemoattractant- and F-actin-dependent manner and is enriched at the leading edge of chemotaxing cells where it regulates F-actin dynamics and signal relay by controlling the activation of rasC and the downstream target of rapamycin complex 2 (TORC2)-Akt/protein kinase B (PKB) pathway. The chain is Protein phosphatase 2A scaffold subunit (pppA) from Dictyostelium discoideum (Social amoeba).